Consider the following 390-residue polypeptide: MAAPCVSCGRVLSLWFTPAVRASLCQRPGYWTASAVGWQTGTRFQLSKLIHTTVVTTKKNVQASRQESYTEDFIKKQIEEFNIGKRHLANMMGEDPETFAEEDIDRAIAYLFPSGLFEKRARPMMKHPEHIFPKQRATQWGEDGRPFHFLFYTGKQSYYSLMHDVYGKVMQLEKHRGPLSASAESRDLIGSRWLIKEELEEMLVEKLSDEDYAQFIRLLEKLLTLPCGPAEEEFVQRFRRSVTIQSKKQLIEPVQYDEQGMAFSTSEGRRKSATAQAVVYEHGSGKIHVNGVDYLIYFPITQDREQLMFPFHFLDRLERHDVTCTVSGGGRSAQAGAIRLAMARALCSFVTEDEVEWMRQAGLLTPDPRIRERKKPGQEGARRKFTWKKR.

The disordered stretch occupies residues 368–390; it reads PRIRERKKPGQEGARRKFTWKKR.

Belongs to the universal ribosomal protein uS9 family. As to quaternary structure, component of the mitochondrial ribosome small subunit (28S) which comprises a 12S rRNA and about 30 distinct proteins.

The protein localises to the mitochondrion. The chain is Small ribosomal subunit protein uS9m (Mrps9) from Mus musculus (Mouse).